Consider the following 37-residue polypeptide: Large ribosomal subunit protein bL36 (37 aa).

This sequence belongs to the bacterial ribosomal protein bL36 family.

This is Large ribosomal subunit protein bL36 from Brevibacillus brevis (strain 47 / JCM 6285 / NBRC 100599).